A 65-amino-acid chain; its full sequence is Large ribosomal subunit protein bL35 (65 aa).

The segment at 1-23 (MPKMKTHRGAAKRFKKTGTGKLK) is disordered.

Belongs to the bacterial ribosomal protein bL35 family.

The polypeptide is Large ribosomal subunit protein bL35 (Clostridium perfringens (strain ATCC 13124 / DSM 756 / JCM 1290 / NCIMB 6125 / NCTC 8237 / Type A)).